Consider the following 177-residue polypeptide: MSIEVSNESGIDVSEAELISVARFVIAKMDVNPAAELSMVLLDTAAMADLHMRWMDLPGPTDVMSFPMDELEPGGRPDAPEPGPAMLGDIVLCPEFAADQAAAAGHSLGHELALLTIHGVLHLLGYDHGEPDEEKEMFALQDRLLEEWVADQVEAYHQDRQQERDRRLLDKSRYFDH.

Residues histidine 118, histidine 122, and histidine 128 each contribute to the Zn(2+) site.

It belongs to the endoribonuclease YbeY family. Requires Zn(2+) as cofactor.

The protein localises to the cytoplasm. Its function is as follows. Single strand-specific metallo-endoribonuclease involved in late-stage 70S ribosome quality control and in maturation of the 3' terminus of the 16S rRNA. This is Endoribonuclease YbeY from Mycolicibacterium paratuberculosis (strain ATCC BAA-968 / K-10) (Mycobacterium paratuberculosis).